The chain runs to 824 residues: MDSEAFQHARDLLDLNFQSLAMKHMDLKQMELDTAAAKVDELTKQLESLWSDSPAPPGAQAGVPSRMARYSTSPVPEHFGSRGSPQKIATDGIEARFGRSESAPSLHPYSPLSPKGRPSSPRTPIYLQPDTYSSLDRAPSPRPRAFDGAGSPHGRAPSPRPGIGPVRQPGPSTPFDYLGRAGSPRGSPLAEGPQAFFPERGPSPRPPAAAYDTAGTFGSPLLGAGGSAFTPPLRAQDDSTLRRRPPKAWNESDLDVAYEKKSSQTASYERLDVFTRPASPGLQLLPWRESSLDGLGASGKDHLTSATLPRNYKVSPLASDRRSDVGSYRRSLGSAGPSGTLPRSWQPVSRIPMPPSSPQPRSTPRQRPIPLSMIFKLQNAFWEHGAGRAVLPGSPIFSRAPPPKLPPQPPPQPQMQPQPQPQPQMQPQSQAQPQTPAPQQTWSPMNEGLLKSPAELEPEPELEVLLAPVEEAGDADEGTVTRPLSPTRLQPALPPEAQTVPELEEVARVLAEIPRPLKRRGSMEQSPAVALPPTHKKQYQQIINRLFHRHGGPGPGGPEPELSTITEGSEARAGPPAPAPPAPIPPPAPPQSSPPEQPQSMEMRSVLRKVGSPRKARRARLNPLVLLLDAALTGELDVVQQAVKEMNDPSQPNEEGITALHNAICGANYPIVDFLIAAGANVNSPDSHGWTPLHCAASCNDTAICTALVQHGAAIFATTLSDGATAIEKCDPYREGYADCATYLADVEQSMGLMHNGVVYALWDYSAEFGDELSFREGESVTVLRRDGPEETDWWWASLHGQEGYVPRNYFGLFPRVKSQRSKI.

Met1 carries the post-translational modification N-acetylmethionine. Disordered stretches follow at residues 48 to 87 and 99 to 271; these read SLWS…SPQK and RSES…YERL. A phosphoserine mark is found at Ser84, Ser100, Ser102, Ser110, Ser113, Ser119, and Ser120. At Thr123 the chain carries Phosphothreonine. Ser134 carries the phosphoserine modification. Omega-N-methylarginine is present on residues Arg137, Arg142, Arg144, Arg160, Arg167, and Arg180. Phosphoserine is present on residues Ser183, Ser187, and Ser203. At Arg205 the chain carries Omega-N-methylarginine. The residue at position 275 (Thr275) is a Phosphothreonine. The residue at position 279 (Ser279) is a Phosphoserine. 2 disordered regions span residues 291–370 and 388–501; these read SLDG…RPIP and RAVL…QTVP. Thr307 bears the Phosphothreonine mark. Residues Ser315, Ser331, and Ser338 each carry the phosphoserine modification. Thr340 is subject to Phosphothreonine. Positions 359 to 370 are enriched in low complexity; sequence QPRSTPRQRPIP. The span at 400–424 shows a compositional bias: pro residues; sequence APPPKLPPQPPPQPQMQPQPQPQPQ. The span at 425–440 shows a compositional bias: low complexity; the sequence is MQPQSQAQPQTPAPQQ. Phosphoserine is present on residues Ser522, Ser563, and Ser593. Residues 547 to 614 form a disordered region; that stretch reads FHRHGGPGPG…SVLRKVGSPR (68 aa). Positions 575-597 are enriched in pro residues; it reads PPAPAPPAPIPPPAPPQSSPPEQ. 2 ANK repeats span residues 655–684 and 688–717; these read EGIT…NVNS and HGWT…AIFA. An SH3 domain is found at 754 to 816; sequence MHNGVVYALW…PRNYFGLFPR (63 aa).

The protein belongs to the iASPP family. In terms of assembly, interacts with TP63 and TP73. Interacts with RELA NF-kappa-B subunit and with SP1 via its C-terminal part. Interacts (via SH3 domain and ANK repeats) with p53/TP53; the interaction inhibits pro-apoptotic activity of p53/TP53. In terms of tissue distribution, most abundant in skin with high levels also found in heart, testis and stomach. In 15.5 dpc embryonic heart, expressed at higher levels in atria than ventricles.

The protein resides in the cytoplasm. Its subcellular location is the nucleus. Regulator that plays a central role in regulation of apoptosis and transcription via its interaction with NF-kappa-B and p53/TP53 proteins. Inhibits p53/TP53 function, possibly by preventing the association between p53/TP53 and ASPP1 or ASPP2, and therefore suppressing the subsequent activation of apoptosis. Is involved in NF-kappa-B dependent negative regulation of inflammatory response. The sequence is that of RelA-associated inhibitor from Mus musculus (Mouse).